Reading from the N-terminus, the 92-residue chain is Small ribosomal subunit protein uS19 (92 aa).

It belongs to the universal ribosomal protein uS19 family.

Functionally, protein S19 forms a complex with S13 that binds strongly to the 16S ribosomal RNA. The sequence is that of Small ribosomal subunit protein uS19 from Bacillus cereus (strain B4264).